The chain runs to 122 residues: uncharacterized protein (122 aa).

The signal sequence occupies residues Met-1–Trp-35. The segment at Tyr-55 to Pro-83 is disordered.

This is an uncharacterized protein from Oryza sativa subsp. japonica (Rice).